We begin with the raw amino-acid sequence, 327 residues long: Methionine import ATP-binding protein MetN (327 aa).

Positions 3–239 (VELKNIEKIY…PKHAVTKELI (237 aa)) constitute an ABC transporter domain. 36–43 (GYSGAGKS) provides a ligand contact to ATP.

This sequence belongs to the ABC transporter superfamily. Methionine importer (TC 3.A.1.24) family. As to quaternary structure, the complex is composed of two ATP-binding proteins (MetN), two transmembrane proteins (MetI) and a solute-binding protein (MetQ).

Its subcellular location is the cell inner membrane. It carries out the reaction L-methionine(out) + ATP + H2O = L-methionine(in) + ADP + phosphate + H(+). The catalysed reaction is D-methionine(out) + ATP + H2O = D-methionine(in) + ADP + phosphate + H(+). Part of the ABC transporter complex MetNIQ involved in methionine import. Responsible for energy coupling to the transport system. In Helicobacter acinonychis (strain Sheeba), this protein is Methionine import ATP-binding protein MetN.